Reading from the N-terminus, the 417-residue chain is Gamma-glutamyl phosphate reductase (417 aa).

Belongs to the gamma-glutamyl phosphate reductase family.

It is found in the cytoplasm. It carries out the reaction L-glutamate 5-semialdehyde + phosphate + NADP(+) = L-glutamyl 5-phosphate + NADPH + H(+). The protein operates within amino-acid biosynthesis; L-proline biosynthesis; L-glutamate 5-semialdehyde from L-glutamate: step 2/2. Functionally, catalyzes the NADPH-dependent reduction of L-glutamate 5-phosphate into L-glutamate 5-semialdehyde and phosphate. The product spontaneously undergoes cyclization to form 1-pyrroline-5-carboxylate. The sequence is that of Gamma-glutamyl phosphate reductase from Sodalis glossinidius (strain morsitans).